The following is a 523-amino-acid chain: Sensory neuron membrane protein 1 (523 aa).

Over 1-10 the chain is Cytoplasmic; the sequence is MRLARGIKYA. A helical transmembrane segment spans residues 11-31; that stretch reads VIGAGVALFGVLFGWVMFPAI. Topologically, residues 32–458 are extracellular; sequence LKSQLKKEMA…NQLFIPKRIV (427 aa). 2 N-linked (GlcNAc...) asparagine glycosylation sites follow: Asn-67 and Asn-229. 3 disulfides stabilise this stretch: Cys-268–Cys-333, Cys-297–Cys-352, and Cys-335–Cys-341. N-linked (GlcNAc...) asparagine glycosylation is present at Asn-440. Residues 459-479 form a helical membrane-spanning segment; that stretch reads SVIRWWLLSFGMLAALGGVIF. Topologically, residues 480-523 are cytoplasmic; sequence HFKDDIMRIAIKGDSSVTKVNPEDGEQKDVSVIGQSHEPPKINM. The interval 499 to 523 is disordered; the sequence is VNPEDGEQKDVSVIGQSHEPPKINM.

Belongs to the CD36 family. Localizes to both male and female antennae but not the leg, wing, gut, head, or thoracic ganglia. Detected throughout the sensory epithelium, associating with both sex-pheromone sensilla and plant-volatile sensilla. Differentially expressed both among different sensilla and different neurons within a given sensillum. Expression coincides with that of several other olfactory-specific proteins that are involved in odor detection.

Its subcellular location is the cell membrane. In terms of biological role, plays an olfactory role that is not restricted to pheromone sensitivity. The protein is Sensory neuron membrane protein 1 of Manduca sexta (Tobacco hawkmoth).